Consider the following 188-residue polypeptide: Elongation factor P (188 aa).

Belongs to the elongation factor P family.

It is found in the cytoplasm. Its pathway is protein biosynthesis; polypeptide chain elongation. Functionally, involved in peptide bond synthesis. Stimulates efficient translation and peptide-bond synthesis on native or reconstituted 70S ribosomes in vitro. Probably functions indirectly by altering the affinity of the ribosome for aminoacyl-tRNA, thus increasing their reactivity as acceptors for peptidyl transferase. The chain is Elongation factor P from Rhodopseudomonas palustris (strain HaA2).